The chain runs to 327 residues: Thiamine-binding periplasmic protein (327 aa).

Positions 1-18 (MLKKYLPLLLLCAAPAFA) are cleaved as a signal peptide. Thiamine contacts are provided by residues 59 to 60 (DG), 161 to 162 (ST), Trp-197, and 215 to 218 (YTTS).

Belongs to the bacterial solute-binding protein 1 family. In terms of assembly, the complex is composed of two ATP-binding proteins (ThiQ), two transmembrane proteins (ThiP) and a solute-binding protein (ThiB).

The protein resides in the periplasm. Functionally, part of the ABC transporter complex ThiBPQ involved in thiamine import. Is also involved in thiamine pyrophosphate transport. The protein is Thiamine-binding periplasmic protein of Salmonella typhimurium (strain LT2 / SGSC1412 / ATCC 700720).